The sequence spans 240 residues: Uridylate kinase (240 aa).

12-15 (KLSG) serves as a coordination point for ATP. Gly54 is a UMP binding site. 2 residues coordinate ATP: Gly55 and Arg59. UMP contacts are provided by residues Asp74 and 135–142 (TGNPFFTT). 3 residues coordinate ATP: Thr162, Tyr168, and Asp171.

The protein belongs to the UMP kinase family. In terms of assembly, homohexamer.

It is found in the cytoplasm. It carries out the reaction UMP + ATP = UDP + ADP. It participates in pyrimidine metabolism; CTP biosynthesis via de novo pathway; UDP from UMP (UMPK route): step 1/1. With respect to regulation, inhibited by UTP. In terms of biological role, catalyzes the reversible phosphorylation of UMP to UDP. The protein is Uridylate kinase of Xanthomonas euvesicatoria pv. vesicatoria (strain 85-10) (Xanthomonas campestris pv. vesicatoria).